The sequence spans 106 residues: ATP-dependent Clp protease adapter protein ClpS (106 aa).

This sequence belongs to the ClpS family. As to quaternary structure, binds to the N-terminal domain of the chaperone ClpA.

In terms of biological role, involved in the modulation of the specificity of the ClpAP-mediated ATP-dependent protein degradation. This Salmonella arizonae (strain ATCC BAA-731 / CDC346-86 / RSK2980) protein is ATP-dependent Clp protease adapter protein ClpS.